The sequence spans 215 residues: Pyridoxine/pyridoxamine 5'-phosphate oxidase (215 aa).

Substrate is bound by residues 9-12 (RRDY) and Lys69. FMN-binding positions include 64–69 (RILLLK), 79–80 (FT), Lys86, and Gln108. 3 residues coordinate substrate: Tyr126, Arg130, and Ser134. FMN is bound by residues 143–144 (QS) and Trp188. 194–196 (RLH) lines the substrate pocket. Position 198 (Arg198) interacts with FMN.

The protein belongs to the pyridoxamine 5'-phosphate oxidase family. Homodimer. Requires FMN as cofactor.

It catalyses the reaction pyridoxamine 5'-phosphate + O2 + H2O = pyridoxal 5'-phosphate + H2O2 + NH4(+). It carries out the reaction pyridoxine 5'-phosphate + O2 = pyridoxal 5'-phosphate + H2O2. Its pathway is cofactor metabolism; pyridoxal 5'-phosphate salvage; pyridoxal 5'-phosphate from pyridoxamine 5'-phosphate: step 1/1. It functions in the pathway cofactor metabolism; pyridoxal 5'-phosphate salvage; pyridoxal 5'-phosphate from pyridoxine 5'-phosphate: step 1/1. Catalyzes the oxidation of either pyridoxine 5'-phosphate (PNP) or pyridoxamine 5'-phosphate (PMP) into pyridoxal 5'-phosphate (PLP). This Pseudomonas fluorescens (strain SBW25) protein is Pyridoxine/pyridoxamine 5'-phosphate oxidase.